Here is a 295-residue protein sequence, read N- to C-terminus: Shikimate dehydrogenase (NADP(+)) (295 aa).

Shikimate-binding positions include serine 24–serine 26 and threonine 71. The active-site Proton acceptor is lysine 75. Glutamate 87 contributes to the NADP(+) binding site. Positions 96 and 111 each coordinate shikimate. NADP(+) is bound by residues glycine 136 to alanine 140, asparagine 160 to arginine 165, and methionine 233. Tyrosine 235 provides a ligand contact to shikimate. NADP(+) is bound at residue glycine 256.

It belongs to the shikimate dehydrogenase family. In terms of assembly, homodimer.

It catalyses the reaction shikimate + NADP(+) = 3-dehydroshikimate + NADPH + H(+). It participates in metabolic intermediate biosynthesis; chorismate biosynthesis; chorismate from D-erythrose 4-phosphate and phosphoenolpyruvate: step 4/7. In terms of biological role, involved in the biosynthesis of the chorismate, which leads to the biosynthesis of aromatic amino acids. Catalyzes the reversible NADPH linked reduction of 3-dehydroshikimate (DHSA) to yield shikimate (SA). In Cupriavidus necator (strain ATCC 17699 / DSM 428 / KCTC 22496 / NCIMB 10442 / H16 / Stanier 337) (Ralstonia eutropha), this protein is Shikimate dehydrogenase (NADP(+)).